A 354-amino-acid polypeptide reads, in one-letter code: Phospho-N-acetylmuramoyl-pentapeptide-transferase (354 aa).

10 helical membrane passes run 23–43 (IAFF…IAWA), 66–86 (TPTM…LLCS), 88–108 (LTNT…FIGF), 138–158 (FALS…FIPF), 161–181 (YALF…ITAS), 193–213 (GLAS…VYLC), 227–247 (VVGV…ILGF), 257–277 (VFMG…TGVV), 282–302 (ILLI…ILQV), and 331–351 (KIIV…LTTL).

This sequence belongs to the glycosyltransferase 4 family. MraY subfamily. Mg(2+) is required as a cofactor.

It localises to the cell inner membrane. It carries out the reaction UDP-N-acetyl-alpha-D-muramoyl-L-alanyl-gamma-D-glutamyl-meso-2,6-diaminopimeloyl-D-alanyl-D-alanine + di-trans,octa-cis-undecaprenyl phosphate = di-trans,octa-cis-undecaprenyl diphospho-N-acetyl-alpha-D-muramoyl-L-alanyl-D-glutamyl-meso-2,6-diaminopimeloyl-D-alanyl-D-alanine + UMP. It participates in cell wall biogenesis; peptidoglycan biosynthesis. Catalyzes the initial step of the lipid cycle reactions in the biosynthesis of the cell wall peptidoglycan: transfers peptidoglycan precursor phospho-MurNAc-pentapeptide from UDP-MurNAc-pentapeptide onto the lipid carrier undecaprenyl phosphate, yielding undecaprenyl-pyrophosphoryl-MurNAc-pentapeptide, known as lipid I. In Campylobacter hominis (strain ATCC BAA-381 / DSM 21671 / CCUG 45161 / LMG 19568 / NCTC 13146 / CH001A), this protein is Phospho-N-acetylmuramoyl-pentapeptide-transferase.